Reading from the N-terminus, the 278-residue chain is 4-hydroxy-3-methylbut-2-enyl diphosphate reductase (278 aa).

C12 serves as a coordination point for [4Fe-4S] cluster. H40 and H75 together coordinate (2E)-4-hydroxy-3-methylbut-2-enyl diphosphate. Dimethylallyl diphosphate is bound by residues H40 and H75. Isopentenyl diphosphate-binding residues include H40 and H75. C97 contributes to the [4Fe-4S] cluster binding site. H125 contacts (2E)-4-hydroxy-3-methylbut-2-enyl diphosphate. Position 125 (H125) interacts with dimethylallyl diphosphate. Residue H125 coordinates isopentenyl diphosphate. E127 serves as the catalytic Proton donor. T157 contacts (2E)-4-hydroxy-3-methylbut-2-enyl diphosphate. C187 lines the [4Fe-4S] cluster pocket. Positions 215, 216, 217, and 258 each coordinate (2E)-4-hydroxy-3-methylbut-2-enyl diphosphate. Dimethylallyl diphosphate is bound by residues S215, S216, N217, and S258. Isopentenyl diphosphate-binding residues include S215, S216, N217, and S258.

The protein belongs to the IspH family. The cofactor is [4Fe-4S] cluster.

The catalysed reaction is isopentenyl diphosphate + 2 oxidized [2Fe-2S]-[ferredoxin] + H2O = (2E)-4-hydroxy-3-methylbut-2-enyl diphosphate + 2 reduced [2Fe-2S]-[ferredoxin] + 2 H(+). The enzyme catalyses dimethylallyl diphosphate + 2 oxidized [2Fe-2S]-[ferredoxin] + H2O = (2E)-4-hydroxy-3-methylbut-2-enyl diphosphate + 2 reduced [2Fe-2S]-[ferredoxin] + 2 H(+). Its pathway is isoprenoid biosynthesis; dimethylallyl diphosphate biosynthesis; dimethylallyl diphosphate from (2E)-4-hydroxy-3-methylbutenyl diphosphate: step 1/1. It participates in isoprenoid biosynthesis; isopentenyl diphosphate biosynthesis via DXP pathway; isopentenyl diphosphate from 1-deoxy-D-xylulose 5-phosphate: step 6/6. Catalyzes the conversion of 1-hydroxy-2-methyl-2-(E)-butenyl 4-diphosphate (HMBPP) into a mixture of isopentenyl diphosphate (IPP) and dimethylallyl diphosphate (DMAPP). Acts in the terminal step of the DOXP/MEP pathway for isoprenoid precursor biosynthesis. The sequence is that of 4-hydroxy-3-methylbut-2-enyl diphosphate reductase from Pseudothermotoga lettingae (strain ATCC BAA-301 / DSM 14385 / NBRC 107922 / TMO) (Thermotoga lettingae).